The chain runs to 146 residues: MLALIQRVTRASVAVDAQVVGQIGPGLLALIGIEPGDTAPQLRRLAERLLGYRVFSDEAGKMNRSLADTGGGLLLVSQFTLAADTKAGMRPSFSTAAPPEEAERAFNQLVAICREKHSGGVETGRFGAHMVVDLVNDGPVTFLLRP.

The Gly-cisPro motif, important for rejection of L-amino acids motif lies at 138–139; the sequence is GP.

The protein belongs to the DTD family. Homodimer.

It is found in the cytoplasm. It carries out the reaction glycyl-tRNA(Ala) + H2O = tRNA(Ala) + glycine + H(+). The catalysed reaction is a D-aminoacyl-tRNA + H2O = a tRNA + a D-alpha-amino acid + H(+). In terms of biological role, an aminoacyl-tRNA editing enzyme that deacylates mischarged D-aminoacyl-tRNAs. Also deacylates mischarged glycyl-tRNA(Ala), protecting cells against glycine mischarging by AlaRS. Acts via tRNA-based rather than protein-based catalysis; rejects L-amino acids rather than detecting D-amino acids in the active site. By recycling D-aminoacyl-tRNA to D-amino acids and free tRNA molecules, this enzyme counteracts the toxicity associated with the formation of D-aminoacyl-tRNA entities in vivo and helps enforce protein L-homochirality. This chain is D-aminoacyl-tRNA deacylase, found in Xanthomonas campestris pv. campestris (strain 8004).